A 241-amino-acid chain; its full sequence is MADS-box transcription factor 57 (241 aa).

The MADS-box domain maps to 1-61; sequence MGRGKIVIRR…GRLYEFSSTN (61 aa). In terms of domain architecture, K-box spans 85–178; that stretch reads IKIWQREAAS…LNVMSQQKLE (94 aa). Residues 216 to 241 form a disordered region; the sequence is LELSQSQQREGECSKTAAPELGLHLP.

Interacts with TB1. Expressed in seedling roots and shoots. Highly expressed in young leaves.

The protein resides in the nucleus. Its function is as follows. Transcriptional factor that targets the CArG motif 5'-C(A/T)TTAAAAAG-3' in the promoter of D14. Directly suppresses D14 expression to control the outgrowth of axillary buds. This Oryza sativa subsp. japonica (Rice) protein is MADS-box transcription factor 57.